The primary structure comprises 223 residues: Small ribosomal subunit protein uS3 (223 aa).

Positions 40–108 (IRELVHRELP…KVHLNIQEIR (69 aa)) constitute a KH type-2 domain.

This sequence belongs to the universal ribosomal protein uS3 family. As to quaternary structure, part of the 30S ribosomal subunit. Forms a tight complex with proteins S10 and S14.

Binds the lower part of the 30S subunit head. Binds mRNA in the 70S ribosome, positioning it for translation. In Thermomicrobium roseum (strain ATCC 27502 / DSM 5159 / P-2), this protein is Small ribosomal subunit protein uS3.